We begin with the raw amino-acid sequence, 714 residues long: Hormonally up-regulated neu tumor-associated kinase (714 aa).

The span at 1–15 shows a compositional bias: low complexity; the sequence is MPAAAGDGLLGEPAA. The tract at residues 1-26 is disordered; the sequence is MPAAAGDGLLGEPAAPGGGGGAEDAA. Positions 62–320 constitute a Protein kinase domain; the sequence is LIGSRKLGEG…IQQALANRWL (259 aa). ATP contacts are provided by residues 68–76 and K91; that span reads LGEGSFAKV. D186 functions as the Proton acceptor in the catalytic mechanism. Positions 437 to 461 are enriched in basic and acidic residues; the sequence is KKPKEQEKRGDFLHRPFSKKLDKNL. Disordered stretches follow at residues 437 to 471, 518 to 552, and 590 to 660; these read KKPK…SGSL, MEFI…HKED, and ARRN…VKSR. The span at 599–611 shows a compositional bias: low complexity; it reads LSPGLPSGSMSPL. A compositionally biased stretch (basic and acidic residues) spans 623–635; it reads AHEDKNSPPKEEG.

This sequence belongs to the protein kinase superfamily. CAMK Ser/Thr protein kinase family. SNF1 subfamily.

It catalyses the reaction L-seryl-[protein] + ATP = O-phospho-L-seryl-[protein] + ADP + H(+). It carries out the reaction L-threonyl-[protein] + ATP = O-phospho-L-threonyl-[protein] + ADP + H(+). This is Hormonally up-regulated neu tumor-associated kinase (HUNK) from Pan troglodytes (Chimpanzee).